Consider the following 404-residue polypeptide: MKLPIYLDYSATTPVDPRVAQKMIDCLTVEGNFGNPASRSHVFGWKAEEAVENARRQVADLVNADPREIVWTSGATESNNLAIKGVAHFYASKGKHLITSKVEHKAVLDTTRQLEREGFEVTYIEPGEDGLITPAMIEAALRDDTILVSIMHVNNEIGTINDIAAIGELTRSRGVLFHVDGAQSTGKVEIDLASLKVDLMSFSAHKTYGPKGIGALYVSRKPRVRLEATMHGGGHERGMRSGTLATHQIVGMGEAFRIAKEEMAAENVRIKALSDRFFKQVENLEELYVNGSLTARVPHNLNLSFNYVEGESLIMALKDLAVSSGSACTSASLEPSYVLRALGRNDELAHSSIRFTFGRFSTEEEIDYAAQKVCEAVTRLRTLSPLWDMFKDGVDISKIEWAAH.

Residues 75–76, asparagine 155, glutamine 183, and 203–205 each bind pyridoxal 5'-phosphate; these read AT and SAH. N6-(pyridoxal phosphate)lysine is present on lysine 206. Residue threonine 243 participates in pyridoxal 5'-phosphate binding. Residue cysteine 328 is the Cysteine persulfide intermediate of the active site. Residue cysteine 328 participates in [2Fe-2S] cluster binding.

It belongs to the class-V pyridoxal-phosphate-dependent aminotransferase family. NifS/IscS subfamily. In terms of assembly, homodimer. Forms a heterotetramer with IscU, interacts with other sulfur acceptors. Pyridoxal 5'-phosphate is required as a cofactor.

The protein localises to the cytoplasm. It catalyses the reaction (sulfur carrier)-H + L-cysteine = (sulfur carrier)-SH + L-alanine. It functions in the pathway cofactor biosynthesis; iron-sulfur cluster biosynthesis. Its function is as follows. Master enzyme that delivers sulfur to a number of partners involved in Fe-S cluster assembly, tRNA modification or cofactor biosynthesis. Catalyzes the removal of elemental sulfur atoms from cysteine to produce alanine. Functions as a sulfur delivery protein for Fe-S cluster synthesis onto IscU, an Fe-S scaffold assembly protein, as well as other S acceptor proteins. The protein is Cysteine desulfurase IscS of Pseudomonas syringae pv. syringae (strain B728a).